Here is a 314-residue protein sequence, read N- to C-terminus: ATP synthase gamma chain (314 aa).

Belongs to the ATPase gamma chain family. In terms of assembly, F-type ATPases have 2 components, CF(1) - the catalytic core - and CF(0) - the membrane proton channel. CF(1) has five subunits: alpha(3), beta(3), gamma(1), delta(1), epsilon(1). CF(0) has three main subunits: a, b and c.

The protein localises to the cellular thylakoid membrane. Its function is as follows. Produces ATP from ADP in the presence of a proton gradient across the membrane. The gamma chain is believed to be important in regulating ATPase activity and the flow of protons through the CF(0) complex. This is ATP synthase gamma chain from Crocosphaera subtropica (strain ATCC 51142 / BH68) (Cyanothece sp. (strain ATCC 51142)).